The chain runs to 1021 residues: Collagenase ColH (1021 aa).

An N-terminal signal peptide occupies residues 1 to 30 (MKRKCLSKRLMLAITMATIFTVNSTLPIYA). Residues 31–40 (AVDKNNATAA) constitute a propeptide that is removed on maturation. Positions 41-320 (VQNESKRYTV…SADQIKRHYD (280 aa)) are activator domain. Residues 41-717 (VQNESKRYTV…TYDVVFHGYL (677 aa)) form an S1 metalloprotease domain region. A catalytic subdomain region spans residues 330 to 601 (PLDKFKKEGK…MQERIDNYEN (272 aa)). A Zn(2+)-binding site is contributed by D421. E430 provides a ligand contact to Ca(2+). H455 is a binding site for Zn(2+). Residue E456 is part of the active site. H459 contacts Zn(2+). Positions 463, 467, and 469 each coordinate Ca(2+). E487 contacts Zn(2+). The tract at residues 609-721 (DDYLVRHAYK…VFHGYLPNEG (113 aa)) is helper subdomain. The S2a domain stretch occupies residues 718–810 (PNEGDSKNSL…VSTTTAEIKD (93 aa)). Ca(2+)-binding residues include N725, S726, D753, D755, D794, N814, K815, D842, D844, D884, E908, E910, N912, N913, T931, D937, Q938, and D939. The PKD 1 domain maps to 727-808 (LPYGKINGTY…SSVSTTTAEI (82 aa)). The segment at 811–904 (LSENKLPVIY…KIKITDPVYP (94 aa)) is S2b domain. The PKD 2 domain maps to 816 to 905 (LPVIYMHVPK…IKITDPVYPI (90 aa)). The disordered stretch occupies residues 903–922 (YPIGTEKEPNNSKETASGPI). The interval 905–1021 (IGTEKEPNNS…RINIEGSVGR (117 aa)) is S3 collagen-binding domain. The tract at residues 1002-1004 (YMF) is collagen-binding.

Belongs to the peptidase M9B family. Collagenase subfamily. Ca(2+) serves as cofactor. Zn(2+) is required as a cofactor. Post-translationally, upon purification gives rise to 98 kDa, 105 kDa and 116 kDa (full-length) proteins, all of which have the same N-terminus.

Its subcellular location is the secreted. It catalyses the reaction Digestion of native collagen in the triple helical region at Xaa-|-Gly bonds. With synthetic peptides, a preference is shown for Gly at P3 and P1', Pro and Ala at P2 and P2', and hydroxyproline, Ala or Arg at P3'.. With respect to regulation, inhibited by EDTA. Inhibited by 1-10-phenanthroline. Inhibited by broad-spectrum zinc metalloprotease inhibitor batimastat. N-aryl mercaptoacetamide-based inhibitors have been isolated that act on clostridial collagenases with submicromolar affinity while having negligibile activity on human collagenases. Functionally, clostridial collagenases are among the most efficient degraders of eukaryotic collagen known; saprophytes use collagen as a carbon source while pathogens additionally digest collagen to aid in host colonization. Has both tripeptidylcarboxypeptidase on Gly-X-Y and endopeptidase activities; the endopeptidase cuts within the triple helix region of collagen while tripeptidylcarboxypeptidase successively digests the exposed ends, thus clostridial collagenases can digest large sections of collagen. The full-length protein has collagenase activity, while both the 116 kDa and 98 kDa forms act on gelatin. In vitro digestion of soluble calf skin collagen fibrils requires both ColG and ColH; ColG forms missing the second collagen-binding domain is also synergistic with ColH, although their overall efficiency is decreased. Digestion of collagen requires Ca(2+) and is inhibited by EDTA. The activator domain (residues 119-388) and catalytic subdomain (330-601) open and close around substrate allowing digestion when the protein is closed. In Hathewaya histolytica (Clostridium histolyticum), this protein is Collagenase ColH.